The primary structure comprises 346 residues: Nuclear distribution protein nudE-like 1 (346 aa).

A coiled-coil region spans residues 13-190 (KEEIVYWREL…LAVRERQTNG (178 aa)). 2 disordered regions span residues 184–205 (RERQ…DCDK) and 325–346 (YDPP…PLSV). A compositionally biased stretch (polar residues) spans 188 to 200 (TNGTRKSAPSSPT). Positions 335–346 (PPSPPGMLPLSV) are enriched in pro residues.

This sequence belongs to the nudE family. In terms of processing, phosphorylated in mitosis.

Its subcellular location is the cytoplasm. The protein localises to the cytoskeleton. The protein resides in the microtubule organizing center. It is found in the centrosome. It localises to the spindle. Functionally, required for organization of the cellular microtubule array and microtubule anchoring at the centrosome. Positively regulates the activity of the minus-end directed microtubule motor protein dynein. May enhance dynein-mediated microtubule sliding by targeting dynein to the microtubule plus end. Positively regulates lysosome peripheral distribution and ruffled border formation in osteoclasts. The protein is Nuclear distribution protein nudE-like 1 (ndel1) of Xenopus tropicalis (Western clawed frog).